Here is an 84-residue protein sequence, read N- to C-terminus: NADH dehydrogenase [ubiquinone] 1 alpha subcomplex subunit 3 (84 aa).

N-acetylalanine is present on Ala2. Residues 19-39 form a helical membrane-spanning segment; sequence LVVSFVVGGLAVILPPLSPYF. The disordered stretch occupies residues 56-84; that stretch reads PVRDDGNMPDVPSHPQDPQGPSLEWLKKL.

It belongs to the complex I NDUFA3 subunit family. Complex I is composed of 45 different subunits.

The protein localises to the mitochondrion inner membrane. Functionally, accessory subunit of the mitochondrial membrane respiratory chain NADH dehydrogenase (Complex I), that is believed not to be involved in catalysis. Complex I functions in the transfer of electrons from NADH to the respiratory chain. The immediate electron acceptor for the enzyme is believed to be ubiquinone. The polypeptide is NADH dehydrogenase [ubiquinone] 1 alpha subcomplex subunit 3 (NDUFA3) (Homo sapiens (Human)).